Here is a 315-residue protein sequence, read N- to C-terminus: Thioredoxin reductase (315 aa).

34 to 41 (EGMKVGGQ) contacts FAD. Cys-134 and Cys-137 are joined by a disulfide. 282 to 291 (DIRVKSLRQV) contacts FAD.

Belongs to the class-II pyridine nucleotide-disulfide oxidoreductase family. In terms of assembly, homodimer. Requires FAD as cofactor.

The protein resides in the cytoplasm. The enzyme catalyses [thioredoxin]-dithiol + NADP(+) = [thioredoxin]-disulfide + NADPH + H(+). This is Thioredoxin reductase (trxB) from Peptoclostridium litorale (Clostridium litorale).